The chain runs to 199 residues: Transcription regulator complex subunit bur6 (199 aa).

The disordered stretch occupies residues Pro106–Glu199. Positions Arg112–Arg121 are enriched in basic residues. The segment covering Ser185–Glu199 has biased composition (polar residues).

The protein belongs to the NC2 alpha/DRAP1 family.

The protein localises to the nucleus. Its function is as follows. Transcription regulator complex subunit that is essential for cell cycle progression. This is Transcription regulator complex subunit bur6 from Schizosaccharomyces pombe (strain 972 / ATCC 24843) (Fission yeast).